The primary structure comprises 450 residues: UDP-N-acetylmuramoylalanine--D-glutamate ligase (450 aa).

119 to 125 (GSNGKTT) is an ATP binding site.

Belongs to the MurCDEF family.

It is found in the cytoplasm. It catalyses the reaction UDP-N-acetyl-alpha-D-muramoyl-L-alanine + D-glutamate + ATP = UDP-N-acetyl-alpha-D-muramoyl-L-alanyl-D-glutamate + ADP + phosphate + H(+). Its pathway is cell wall biogenesis; peptidoglycan biosynthesis. Functionally, cell wall formation. Catalyzes the addition of glutamate to the nucleotide precursor UDP-N-acetylmuramoyl-L-alanine (UMA). In Streptococcus pneumoniae (strain ATCC 700669 / Spain 23F-1), this protein is UDP-N-acetylmuramoylalanine--D-glutamate ligase.